The following is a 56-amino-acid chain: Light-harvesting protein B-880 beta chain (56 aa).

Over A1–G22 the chain is Cytoplasmic. Residues H21 and H39 each coordinate a bacteriochlorophyll. Residues V23 to W45 traverse the membrane as a helical segment. The Periplasmic segment spans residues R46–A56.

It belongs to the antenna complex beta subunit family. In terms of assembly, the core complex is formed by different alpha and beta chains, binding bacteriochlorophyll molecules, and arranged most probably in tetrameric structures disposed around the reaction center. The non-pigmented gamma chains may constitute additional components.

It localises to the cell inner membrane. Its function is as follows. Antenna complexes are light-harvesting systems, which transfer the excitation energy to the reaction centers. The polypeptide is Light-harvesting protein B-880 beta chain (Afifella marina (Rhodobium marinum)).